The primary structure comprises 538 residues: Cytochrome P450 monooxygenase astC (538 aa).

Residues 18 to 38 (ALMLPALVGCALLIYRAFFAI) form a helical membrane-spanning segment. C481 provides a ligand contact to heme.

This sequence belongs to the cytochrome P450 family. Heme is required as a cofactor.

The protein localises to the membrane. It participates in secondary metabolite biosynthesis; terpenoid biosynthesis. In terms of biological role, cytochrome P450 monooxygenase; part of the gene cluster that mediates the biosynthesis of the sesquiterpenoid aspterric acid (AA), an inhibitor of dihydroxy-acid dehydratase (DHAD) effective as an herbicide. AstC catalyzes the third and last step within the pathway and converts the alpha-epoxy carboxylate intermediate produced by the cytochrome P450 monooxygenase astC from (-)daucane into the tricyclic aspterric acid. The polypeptide is Cytochrome P450 monooxygenase astC (Aspergillus terreus (strain NIH 2624 / FGSC A1156)).